A 504-amino-acid polypeptide reads, in one-letter code: 13S globulin seed storage protein 2 (504 aa).

A signal peptide spans 1-20; sequence MSTKLILSFSLCLMVLSCSA. Cystine bridges form between C46/C79 and C122/C320. A Cupin type-1 1 domain is found at 51-265; that stretch reads LTASEPSRRV…FRDVDRETIS (215 aa). Disordered regions lie at residues 128-158, 214-237, and 289-314; these read SDSE…GDQH, GQSQ…DDEA, and QDFE…RSNG. Basic and acidic residues-rich tracts occupy residues 144-158 and 218-231; these read RQSE…GDQH and RETR…QSRE. The Cupin type-1 2 domain maps to 326 to 475; the sequence is RNFNTPTNTY…SYDISTKEAY (150 aa).

Belongs to the 11S seed storage protein (globulins) family. As to quaternary structure, hexamer; each subunit is composed of an acidic and a basic chain derived from a single precursor and linked by a disulfide bond.

Functionally, seed storage protein. In Fagopyrum esculentum (Common buckwheat), this protein is 13S globulin seed storage protein 2 (FA18).